Consider the following 110-residue polypeptide: Large ribosomal subunit protein uL22 (110 aa).

This sequence belongs to the universal ribosomal protein uL22 family. Part of the 50S ribosomal subunit.

Functionally, this protein binds specifically to 23S rRNA; its binding is stimulated by other ribosomal proteins, e.g. L4, L17, and L20. It is important during the early stages of 50S assembly. It makes multiple contacts with different domains of the 23S rRNA in the assembled 50S subunit and ribosome. Its function is as follows. The globular domain of the protein is located near the polypeptide exit tunnel on the outside of the subunit, while an extended beta-hairpin is found that lines the wall of the exit tunnel in the center of the 70S ribosome. The protein is Large ribosomal subunit protein uL22 of Desulfotalea psychrophila (strain LSv54 / DSM 12343).